Consider the following 131-residue polypeptide: Profilin-4 (131 aa).

A disulfide bond links Cys-13 and Cys-115. The Involved in PIP2 interaction motif lies at 81–97 (AVIRGKKGAGGITVKKT). Thr-111 carries the phosphothreonine modification.

It belongs to the profilin family. Occurs in many kinds of cells as a complex with monomeric actin in a 1:1 ratio. Post-translationally, phosphorylated by MAP kinases.

It localises to the cytoplasm. It is found in the cytoskeleton. In terms of biological role, binds to actin and affects the structure of the cytoskeleton. At high concentrations, profilin prevents the polymerization of actin, whereas it enhances it at low concentrations. This chain is Profilin-4, found in Olea europaea (Common olive).